We begin with the raw amino-acid sequence, 772 residues long: Carnitine O-palmitoyltransferase 1, muscle isoform (772 aa).

Over 1 to 47 (MAEAHQAVAFQFTVTPDGVDFRLSREALRHIYLSGINSWKKRLIRIK) the chain is Cytoplasmic. Residues 48–73 (NGILRGVYPGSPTSWLVVVMATVGSN) traverse the membrane as a helical segment. Residues 74-102 (YCKVDISMGLVHCIQRCLPTRYGSYGTPQ) are Mitochondrial intermembrane-facing. Residues 103-122 (TETLLSMVIFSTGVWATGIF) traverse the membrane as a helical segment. Over 123–772 (LFRQTLKLLL…DLFKISKTDS (650 aa)) the chain is Cytoplasmic. H473 (proton acceptor) is an active-site residue. CoA is bound at residue 555-567 (GKGLIKKCRTSPD). Y589 and T602 together coordinate (R)-carnitine.

It belongs to the carnitine/choline acetyltransferase family. High expression in heart, skeletal muscle and brown adipose tissue. Also expressed in white adipose tissue, but not in liver.

It is found in the mitochondrion outer membrane. The enzyme catalyses (R)-carnitine + hexadecanoyl-CoA = O-hexadecanoyl-(R)-carnitine + CoA. The protein operates within lipid metabolism; fatty acid beta-oxidation. Functionally, catalyzes the transfer of the acyl group of long-chain fatty acid-CoA conjugates onto carnitine, an essential step for the mitochondrial uptake of long-chain fatty acids and their subsequent beta-oxidation in the mitochondrion. In Rattus norvegicus (Rat), this protein is Carnitine O-palmitoyltransferase 1, muscle isoform (Cpt1b).